The chain runs to 890 residues: Probable LRR receptor-like serine/threonine-protein kinase At1g51860 (890 aa).

Residues 1-23 (MKSLHWFLHLLIIAFTVLRSVEA) form the signal peptide. Residues 24 to 513 (QNQAGFISLD…KESKKVPMVA (490 aa)) are Extracellular-facing. N-linked (GlcNAc...) asparagine glycans are attached at residues N49, N96, N142, N181, N256, N285, N289, N295, N312, N332, N340, N402, and N419. LRR repeat units lie at residues 412 to 435 (RIIS…SKLT), 436 to 458 (LLTV…FAEM), and 460 to 481 (SLKL…PDSL). N-linked (GlcNAc...) asparagine glycans are attached at residues N465, N473, and N497. Residues 514–534 (IAASVAGVFALLVILAIFFVI) traverse the membrane as a helical segment. Residues 535–890 (KRKNVKAHKS…STSDFAPGAR (356 aa)) are Cytoplasmic-facing. The residue at position 575 (T575) is a Phosphothreonine. In terms of domain architecture, Protein kinase spans 584 to 856 (NNFERVLGKG…HVVMELNDCV (273 aa)). ATP-binding positions include 590 to 598 (LGKGGFGTV) and K611. Y656 bears the Phosphotyrosine mark. The active-site Proton acceptor is the D708. A Phosphoserine modification is found at S742. Residues T743 and T748 each carry the phosphothreonine modification. Y756 is modified (phosphotyrosine).

Belongs to the protein kinase superfamily. Ser/Thr protein kinase family.

Its subcellular location is the membrane. It carries out the reaction L-seryl-[protein] + ATP = O-phospho-L-seryl-[protein] + ADP + H(+). The catalysed reaction is L-threonyl-[protein] + ATP = O-phospho-L-threonyl-[protein] + ADP + H(+). The protein is Probable LRR receptor-like serine/threonine-protein kinase At1g51860 of Arabidopsis thaliana (Mouse-ear cress).